Here is an 82-residue protein sequence, read N- to C-terminus: Cytotoxin homolog Clbp-3 (82 aa).

A signal peptide spans 1-21 (MKTLLLTLVVVTIVCLDLGYT). Intrachain disulfides connect C24–C43, C36–C60, C64–C75, and C76–C81.

The protein belongs to the three-finger toxin family. Short-chain subfamily. Orphan group XV sub-subfamily. In terms of tissue distribution, expressed by the venom gland.

It is found in the secreted. The protein resides in the target cell membrane. Functionally, has low cytotoxic activity. The sequence is that of Cytotoxin homolog Clbp-3 from Naja atra (Chinese cobra).